The chain runs to 219 residues: MKDFSDFFRNPHIWDREIVAVGGDLSPERLLYAYKNGIFPWSDQPILWYCLDPRSIFDLNKLHISKRLKRKINQKRYTITFNRAFEQVMRCCAYRPGEDTWITDLFIKSYTEFHKLGYAHSLEVWDENGKLGGGVYGIAIGNFFAGESMFSFIPDFGKIGLFHLFETLKKDHFTLFDTQQLNLVTLSLGAYQIPKKEYLKRLESAVASGKKWNPSHFVL.

The protein belongs to the L/F-transferase family.

The protein resides in the cytoplasm. It carries out the reaction N-terminal L-lysyl-[protein] + L-leucyl-tRNA(Leu) = N-terminal L-leucyl-L-lysyl-[protein] + tRNA(Leu) + H(+). The enzyme catalyses N-terminal L-arginyl-[protein] + L-leucyl-tRNA(Leu) = N-terminal L-leucyl-L-arginyl-[protein] + tRNA(Leu) + H(+). The catalysed reaction is L-phenylalanyl-tRNA(Phe) + an N-terminal L-alpha-aminoacyl-[protein] = an N-terminal L-phenylalanyl-L-alpha-aminoacyl-[protein] + tRNA(Phe). Functionally, functions in the N-end rule pathway of protein degradation where it conjugates Leu, Phe and, less efficiently, Met from aminoacyl-tRNAs to the N-termini of proteins containing an N-terminal arginine or lysine. This Leptospira interrogans serogroup Icterohaemorrhagiae serovar copenhageni (strain Fiocruz L1-130) protein is Leucyl/phenylalanyl-tRNA--protein transferase.